The sequence spans 226 residues: uncharacterized protein (226 aa).

Residues 121–163 adopt a coiled-coil conformation; sequence TVDELIKTIEKELNKVKKSRKNREKKTNEVEEIIEELIEEDDI.

This is an uncharacterized protein from Methanocaldococcus jannaschii (strain ATCC 43067 / DSM 2661 / JAL-1 / JCM 10045 / NBRC 100440) (Methanococcus jannaschii).